The chain runs to 260 residues: NAD-capped RNA hydrolase NudC (260 aa).

A substrate-binding site is contributed by Arg-69. Zn(2+)-binding residues include Cys-98 and Cys-101. Glu-111 contacts substrate. Zn(2+) is bound by residues Cys-116 and Cys-119. A substrate-binding site is contributed by Tyr-124. The 124-residue stretch at 125-248 (PQIAPCIIVA…TVARRLIEDT (124 aa)) folds into the Nudix hydrolase domain. A divalent metal cation contacts are provided by Ala-158, Glu-174, and Glu-178. The short motif at 159 to 180 (GFVEVGETLEQTVVREVMEESQ) is the Nudix box element. 192 to 199 (QPWPFPHS) lines the substrate pocket. Glu-219 contributes to the a divalent metal cation binding site. Ala-241 lines the substrate pocket.

This sequence belongs to the Nudix hydrolase family. NudC subfamily. Homodimer. Requires Mg(2+) as cofactor. The cofactor is Mn(2+). Zn(2+) is required as a cofactor.

It catalyses the reaction a 5'-end NAD(+)-phospho-ribonucleoside in mRNA + H2O = a 5'-end phospho-adenosine-phospho-ribonucleoside in mRNA + beta-nicotinamide D-ribonucleotide + 2 H(+). The catalysed reaction is NAD(+) + H2O = beta-nicotinamide D-ribonucleotide + AMP + 2 H(+). It carries out the reaction NADH + H2O = reduced beta-nicotinamide D-ribonucleotide + AMP + 2 H(+). MRNA decapping enzyme that specifically removes the nicotinamide adenine dinucleotide (NAD) cap from a subset of mRNAs by hydrolyzing the diphosphate linkage to produce nicotinamide mononucleotide (NMN) and 5' monophosphate mRNA. The NAD-cap is present at the 5'-end of some mRNAs and stabilizes RNA against 5'-processing. Has preference for mRNAs with a 5'-end purine. Catalyzes the hydrolysis of a broad range of dinucleotide pyrophosphates. The chain is NAD-capped RNA hydrolase NudC from Pectobacterium carotovorum subsp. carotovorum (strain PC1).